Reading from the N-terminus, the 95-residue chain is Protein TusB (95 aa).

It belongs to the DsrH/TusB family. Heterohexamer, formed by a dimer of trimers. The hexameric TusBCD complex contains 2 copies each of TusB, TusC and TusD. The TusBCD complex interacts with TusE.

The protein localises to the cytoplasm. In terms of biological role, part of a sulfur-relay system required for 2-thiolation of 5-methylaminomethyl-2-thiouridine (mnm(5)s(2)U) at tRNA wobble positions. This is Protein TusB from Shigella sonnei (strain Ss046).